The chain runs to 317 residues: Ribosomal protein L11 methyltransferase (317 aa).

S-adenosyl-L-methionine is bound by residues threonine 169, glycine 190, aspartate 211, and asparagine 256.

It belongs to the methyltransferase superfamily. PrmA family.

Its subcellular location is the cytoplasm. It catalyses the reaction L-lysyl-[protein] + 3 S-adenosyl-L-methionine = N(6),N(6),N(6)-trimethyl-L-lysyl-[protein] + 3 S-adenosyl-L-homocysteine + 3 H(+). Methylates ribosomal protein L11. The polypeptide is Ribosomal protein L11 methyltransferase (Helicobacter hepaticus (strain ATCC 51449 / 3B1)).